The chain runs to 238 residues: Large ribosomal subunit protein uL1 (238 aa).

Belongs to the universal ribosomal protein uL1 family. In terms of assembly, part of the 50S ribosomal subunit.

In terms of biological role, binds directly to 23S rRNA. The L1 stalk is quite mobile in the ribosome, and is involved in E site tRNA release. Protein L1 is also a translational repressor protein, it controls the translation of the L11 operon by binding to its mRNA. The chain is Large ribosomal subunit protein uL1 from Frankia alni (strain DSM 45986 / CECT 9034 / ACN14a).